A 278-amino-acid polypeptide reads, in one-letter code: Probable F-box protein At1g14315 (278 aa).

One can recognise an F-box domain in the interval M1–K43.

In Arabidopsis thaliana (Mouse-ear cress), this protein is Probable F-box protein At1g14315.